We begin with the raw amino-acid sequence, 293 residues long: MATH domain and coiled-coil domain-containing protein At3g58400 (293 aa).

Residues R3–I126 form the MATH domain. The stretch at K227–A285 forms a coiled coil.

The sequence is that of MATH domain and coiled-coil domain-containing protein At3g58400 from Arabidopsis thaliana (Mouse-ear cress).